A 514-amino-acid polypeptide reads, in one-letter code: MSVSKKPMVLVILDGYGYREEQQDNAIFSAKTPVMDALWANRPHTLIDASGLEVGLPDRQMGNSEVGHVNLGAGRIVYQDLTRLDVEIKDRAFFANPVLTGAVDKAKNAGKAVHIMGLLSAGGVHSHEDHIMAMVELAAERGAEKIYLHAFLDGRDTPPRSAESSLKKFEEKFAALGKGRVASIIGRYYAMDRDNRWDRVEKAYDLLTLAQGEFQADTAVAGLQAAYARDENDEFVKATVIRAEGQPDAAMEDGDALIFMNFRADRAREITRAFVNADFDGFARKKVVNVDFVMLTEYAADIKTAVAYPPASLVNTFGEWMAKNDKTQLRISETEKYAHVTFFFNGGVEESFKGEDRILINSPKVATYDLQPEMSSAELTEKLVAAIKSGKYDTIICNYPNGDMVGHTGVMEAAVKAVEALDHCVEEVAKAVESVGGQLLITADHGNAEQMRDPATGQAHTAHTNLPVPLIYVGDKNVKAVAGGKLSDIAPTMLSLMGMEIPQEMTGKPLFIVE.

2 residues coordinate Mn(2+): Asp-14 and Ser-64. Ser-64 functions as the Phosphoserine intermediate in the catalytic mechanism. Residues His-125, 155-156, Arg-187, Arg-193, 263-266, and Lys-336 each bind substrate; these read RD and RADR. 5 residues coordinate Mn(2+): Asp-403, His-407, Asp-444, His-445, and His-463.

Belongs to the BPG-independent phosphoglycerate mutase family. In terms of assembly, monomer. Mn(2+) serves as cofactor.

The catalysed reaction is (2R)-2-phosphoglycerate = (2R)-3-phosphoglycerate. The protein operates within carbohydrate degradation; glycolysis; pyruvate from D-glyceraldehyde 3-phosphate: step 3/5. Its function is as follows. Catalyzes the interconversion of 2-phosphoglycerate and 3-phosphoglycerate. This is 2,3-bisphosphoglycerate-independent phosphoglycerate mutase from Escherichia coli (strain ATCC 8739 / DSM 1576 / NBRC 3972 / NCIMB 8545 / WDCM 00012 / Crooks).